The primary structure comprises 481 residues: 5-hydroxytryptamine receptor 2B (481 aa).

The Extracellular segment spans residues 1–56 (MALSYRVSELQSTIPEHILQSTFVHVISSNWSGLQTESIPEEMKQIVEEQGNKLHW). The N-linked (GlcNAc...) asparagine glycan is linked to N30. A helical transmembrane segment spans residues 57 to 79 (AALLILMVIIPTIGGNTLVILAV). Residues 80-90 (SLEKKLQYATN) lie on the Cytoplasmic side of the membrane. A helical transmembrane segment spans residues 91 to 113 (YFLMSLAVADLLVGLFVMPIALL). The Extracellular portion of the chain corresponds to 114 to 129 (TIMFEAMWPLPLVLCP). A disulfide bridge connects residues C128 and C207. The helical transmembrane segment at 130-151 (AWLFLDVLFSTASIMHLCAISV) threads the bilayer. Positions 135 and 140 each coordinate ergotamine. The DRY motif; important for ligand-induced conformation changes motif lies at 152 to 154 (DRY). Over 152–171 (DRYIAIKKPIQANQYNSRAT) the chain is Cytoplasmic. The helical transmembrane segment at 172-192 (AFIKITVVWLISIGIAIPVPI) threads the bilayer. At 193-216 (KGIETDVDNPNNITCVLTKERFGD) the chain is on the extracellular side. Position 209 (L209) interacts with ergotamine. The [DE]RFG motif; may stabilize a conformation that preferentially activates signaling via beta-arrestin family members motif lies at 212 to 215 (ERFG). A helical transmembrane segment spans residues 217–239 (FMLFGSLAAFFTPLAIMIVTYFL). Residues 240-324 (TIHALQKKAY…TISNEQRASK (85 aa)) are Cytoplasmic-facing. Residues 325–345 (VLGIVFFLFLLMWCPFFITNI) form a helical membrane-spanning segment. The Extracellular portion of the chain corresponds to 346–360 (TLVLCDSCNQTTLQM). C350 and C353 are oxidised to a cystine. A helical transmembrane segment spans residues 361 to 382 (LLEIFVWIGYVSSGVNPLVYTL). Positions 376–380 (NPLVY) match the NPxxY motif; important for ligand-induced conformation changes and signaling motif. Over 383 to 481 (FNKTFRDAFG…DKTEEQVSYV (99 aa)) the chain is Cytoplasmic. C397 carries S-palmitoyl cysteine lipidation. The PDZ-binding motif lies at 479 to 481 (SYV).

It belongs to the G-protein coupled receptor 1 family. As to quaternary structure, interacts (via C-terminus) with MPDZ. Ubiquitous. Detected in liver, kidney, heart, pulmonary artery, and intestine. Detected at lower levels in blood, placenta and brain, especially in cerebellum, occipital cortex and frontal cortex.

Its subcellular location is the cell membrane. The protein localises to the synapse. The protein resides in the synaptosome. Its function is as follows. G-protein coupled receptor for 5-hydroxytryptamine (serotonin). Also functions as a receptor for various ergot alkaloid derivatives and psychoactive substances. Ligand binding causes a conformation change that triggers signaling via guanine nucleotide-binding proteins (G proteins) and modulates the activity of downstream effectors. HTR2B is coupled to G(q)/G(11) G alpha proteins and activates phospholipase C-beta, releasing diacylglycerol (DAG) and inositol 1,4,5-trisphosphate (IP3) second messengers that modulate the activity of phosphatidylinositol 3-kinase and promote the release of Ca(2+) ions from intracellular stores, respectively. Beta-arrestin family members inhibit signaling via G proteins and mediate activation of alternative signaling pathways. Plays a role in the regulation of dopamine and 5-hydroxytryptamine release, 5-hydroxytryptamine uptake and in the regulation of extracellular dopamine and 5-hydroxytryptamine levels, and thereby affects neural activity. May play a role in the perception of pain. Plays a role in the regulation of behavior, including impulsive behavior. Required for normal proliferation of embryonic cardiac myocytes and normal heart development. Protects cardiomyocytes against apoptosis. Plays a role in the adaptation of pulmonary arteries to chronic hypoxia. Plays a role in vasoconstriction. Required for normal osteoblast function and proliferation, and for maintaining normal bone density. Required for normal proliferation of the interstitial cells of Cajal in the intestine. The chain is 5-hydroxytryptamine receptor 2B from Homo sapiens (Human).